The chain runs to 292 residues: Cyclin-dependent kinase 5 homolog (292 aa).

The 283-residue stretch at 4–286 (YEKLEKIGEG…AEQAMQHPYF (283 aa)) folds into the Protein kinase domain. ATP-binding positions include 10–18 (IGEGTYGTV) and lysine 33. The residue at position 14 (threonine 14) is a Phosphothreonine. Position 15 is a phosphotyrosine (tyrosine 15). Catalysis depends on aspartate 126, which acts as the Proton acceptor. Serine 159 bears the Phosphoserine mark.

It belongs to the protein kinase superfamily. CMGC Ser/Thr protein kinase family. CDC2/CDKX subfamily.

The enzyme catalyses L-seryl-[protein] + ATP = O-phospho-L-seryl-[protein] + ADP + H(+). It catalyses the reaction L-threonyl-[protein] + ATP = O-phospho-L-threonyl-[protein] + ADP + H(+). Its function is as follows. Probably involved in the control of the cell cycle. Interacts with D1 and D3-type G1 cyclins. Possible regulator of neuronal differentiation and/or development. This is Cyclin-dependent kinase 5 homolog (Cdk5) from Glossina morsitans morsitans (Savannah tsetse fly).